Here is a 324-residue protein sequence, read N- to C-terminus: Hydroxyacylglutathione hydrolase 2, mitochondrial (324 aa).

A mitochondrion-targeting transit peptide spans 1–64 (MQTISKASSA…KSIRVSKFCS (64 aa)). H124 and H126 together coordinate Zn(2+). Positions 128 and 129 each coordinate Fe cation. H182 and D201 together coordinate Zn(2+). Positions 201 and 239 each coordinate Fe cation.

This sequence belongs to the metallo-beta-lactamase superfamily. Glyoxalase II family. Monomer. Fe(3+) is required as a cofactor. Requires Fe(2+) as cofactor. The cofactor is Zn(2+).

It localises to the mitochondrion. It catalyses the reaction an S-(2-hydroxyacyl)glutathione + H2O = a 2-hydroxy carboxylate + glutathione + H(+). Its pathway is secondary metabolite metabolism; methylglyoxal degradation; (R)-lactate from methylglyoxal: step 2/2. Thiolesterase that catalyzes the hydrolysis of S-D-lactoyl-glutathione to form glutathione and D-lactic acid. This Arabidopsis thaliana (Mouse-ear cress) protein is Hydroxyacylglutathione hydrolase 2, mitochondrial.